The primary structure comprises 108 residues: ATP synthase epsilon chain (108 aa).

This sequence belongs to the ATPase epsilon chain family. In terms of assembly, F-type ATPases have 2 components, CF(1) - the catalytic core - and CF(0) - the membrane proton channel. CF(1) has five subunits: alpha(3), beta(3), gamma(1), delta(1), epsilon(1). CF(0) has three main subunits: a, b and c.

It is found in the cell inner membrane. Functionally, produces ATP from ADP in the presence of a proton gradient across the membrane. The sequence is that of ATP synthase epsilon chain from Rickettsia bellii (strain OSU 85-389).